Consider the following 61-residue polypeptide: uncharacterized protein (61 aa).

This is an uncharacterized protein from Homo sapiens (Human).